The primary structure comprises 548 residues: Chaperonin GroEL 1 (548 aa).

ATP contacts are provided by residues 30-33 (TLGP), Lys-51, 87-91 (DGTTT), Gly-415, 479-481 (NAA), and Asp-495.

Belongs to the chaperonin (HSP60) family. As to quaternary structure, forms a cylinder of 14 subunits composed of two heptameric rings stacked back-to-back. Interacts with the co-chaperonin GroES.

Its subcellular location is the cytoplasm. The enzyme catalyses ATP + H2O + a folded polypeptide = ADP + phosphate + an unfolded polypeptide.. In terms of biological role, together with its co-chaperonin GroES, plays an essential role in assisting protein folding. The GroEL-GroES system forms a nano-cage that allows encapsulation of the non-native substrate proteins and provides a physical environment optimized to promote and accelerate protein folding. The chain is Chaperonin GroEL 1 from Escherichia coli O1:K1 / APEC.